Here is a 296-residue protein sequence, read N- to C-terminus: MTAEKAPSFQELILRLQSYWASKGCAILQPYDVEVGAGTLHPATTLRSLGPRPWKAAYVQPSRRPGDGRYGENPNRLQHYYQFQVLLKPCPTDLQDLYLGSLDAIGIDRDLHDVRFVEDDWENPTVGAWGLGWEVWCDGMEVSQFTYFQQVGGQDVELVSGELTYGLERLAMYVQGVENVYDLDFNGAGMTYGDVFLEAEKQYSEFNFEHADVDMLIEWFKGAENQCMALLNLDKPLPLPAYDFCLKASHLFNLVDARGAISVAERASWIARVRELAKGCADAWVKSERALAEAAE.

This sequence belongs to the class-II aminoacyl-tRNA synthetase family. In terms of assembly, tetramer of two alpha and two beta subunits.

It is found in the cytoplasm. The enzyme catalyses tRNA(Gly) + glycine + ATP = glycyl-tRNA(Gly) + AMP + diphosphate. In Maricaulis maris (strain MCS10) (Caulobacter maris), this protein is Glycine--tRNA ligase alpha subunit.